A 321-amino-acid polypeptide reads, in one-letter code: UDP-N-acetyl-alpha-D-glucosaminuronate decarboxylase (321 aa).

The NAD(+) site is built by G12, F13, I14, D33, N34, Y36, G38, L76, T95, A117, Y148, and K152. Y148 acts as the Proton acceptor in catalysis.

Belongs to the NAD(P)-dependent epimerase/dehydratase family. In terms of assembly, homodimer. Requires NAD(+) as cofactor.

It carries out the reaction UDP-2-acetamido-2-deoxy-alpha-D-glucuronate + H(+) = UDP-N-acetyl-alpha-D-xylosamine + CO2. Activity is completely inhibited by NADH but not by NADPH. Its function is as follows. Decarboxylase involved in the biosynthesis of the nucleotide-sugar UDP-N-acetylxylosamine (UDP-XylNAc). Catalyzes the NAD-dependent decarboxylation of UDP-N-acetylglucosaminuronic acid (UDP-GlcNAcA) to UDP-XylNAc. Cannot use other UDP-uronates, such as UDP-glucuronic acid (UDP-GlcA) and UDP-galacturonic acid (UDP-GalA). The sequence is that of UDP-N-acetyl-alpha-D-glucosaminuronate decarboxylase from Bacillus cytotoxicus (strain DSM 22905 / CIP 110041 / 391-98 / NVH 391-98).